The sequence spans 430 residues: Tyrosine--tRNA ligase (430 aa).

Y32 contacts L-tyrosine. Positions 37–46 (PTADSLHIGH) match the 'HIGH' region motif. Y172 and Q176 together coordinate L-tyrosine. The short motif at 232-236 (KFGKT) is the 'KMSKS' region element. An ATP-binding site is contributed by K235. The S4 RNA-binding domain maps to 362–430 (ISLVDLLADA…KKSYYLIIVE (69 aa)).

It belongs to the class-I aminoacyl-tRNA synthetase family. TyrS type 1 subfamily. Homodimer.

It localises to the cytoplasm. The catalysed reaction is tRNA(Tyr) + L-tyrosine + ATP = L-tyrosyl-tRNA(Tyr) + AMP + diphosphate + H(+). Its function is as follows. Catalyzes the attachment of tyrosine to tRNA(Tyr) in a two-step reaction: tyrosine is first activated by ATP to form Tyr-AMP and then transferred to the acceptor end of tRNA(Tyr). The sequence is that of Tyrosine--tRNA ligase from Porphyromonas gingivalis (strain ATCC 33277 / DSM 20709 / CIP 103683 / JCM 12257 / NCTC 11834 / 2561).